Here is a 331-residue protein sequence, read N- to C-terminus: Probable mannose-1-phosphate guanylyltransferase 3 (331 aa).

Residue Lys3 coordinates diphosphate. Residues Gly66, Asn90, Asp92, Gly127, and Asn154 each contribute to the GDP-alpha-D-mannose site.

The protein belongs to the transferase hexapeptide repeat family.

The catalysed reaction is alpha-D-mannose 1-phosphate + GTP + H(+) = GDP-alpha-D-mannose + diphosphate. It participates in nucleotide-sugar biosynthesis; GDP-alpha-D-mannose biosynthesis; GDP-alpha-D-mannose from alpha-D-mannose 1-phosphate (GTP route): step 1/1. Catalyzes a reaction of the Smirnoff-Wheeler pathway, the major route to ascorbate biosynthesis in plants. This chain is Probable mannose-1-phosphate guanylyltransferase 3, found in Arabidopsis thaliana (Mouse-ear cress).